The sequence spans 280 residues: Delta(3,5)-Delta(2,4)-dienoyl-CoA isomerase (280 aa).

E154 acts as the Proton donor/acceptor in catalysis. The short motif at 278–280 is the Peroxisome targeting signal (PTS1) element; sequence HKL.

It belongs to the enoyl-CoA hydratase/isomerase family.

The protein resides in the cytoplasm. It localises to the cytosol. Its subcellular location is the peroxisome. The catalysed reaction is a (3E,5Z)-dienoyl-CoA = a (2E,4E)-(5,6-saturated)-dienoyl-CoA. Its pathway is lipid metabolism; fatty acid beta-oxidation. In terms of biological role, peroxisomal di-isomerase that is involved in fatty acid metabolism enzyme by converting 3,5-dienoyl-CoAs to the corresponding 2,4-dienoyl-CoAs. Involved in fatty acid beta-oxidation, which is important for lipid droplets degradation and infectious growth. The chain is Delta(3,5)-Delta(2,4)-dienoyl-CoA isomerase from Pyricularia oryzae (strain 70-15 / ATCC MYA-4617 / FGSC 8958) (Rice blast fungus).